Here is a 473-residue protein sequence, read N- to C-terminus: M-phase inducer phosphatase 3 (473 aa).

Positions 1–23 (MSTELFSSTREEGSSGSGPSFRS) are disordered. Ser-2 carries the N-acetylserine modification. 2 positions are modified to phosphoserine: Ser-20 and Ser-38. Thr-48 is subject to Phosphothreonine. 3 positions are modified to phosphoserine: Ser-57, Ser-61, and Ser-64. Thr-67 is subject to Phosphothreonine. Ser-122 is subject to Phosphoserine; by CDK1. The residue at position 129 (Ser-129) is a Phosphoserine. A Phosphothreonine modification is found at Thr-130. The segment at 132–158 (NGLDRGHRKRDAMCSSSANKENDNGNL) is disordered. Over residues 145 to 158 (CSSSANKENDNGNL) the composition is skewed to polar residues. Residue Ser-168 is modified to Phosphoserine. A phosphoserine; by PLK3 mark is found at Ser-191 and Ser-198. A Phosphoserine; by CDK1 modification is found at Ser-214. At Ser-216 the chain carries Phosphoserine; by CHEK1, CHEK2, BRSK1, MAPK14 AND MARK3. Residues 321-428 (LIEKFYVIDC…FFPEYMELCE (108 aa)) form the Rhodanese domain. The segment at 334–379 (YEYLGGHIQGALNLYSQEELFNFFLKKPIVPLDTQKRIIIVFHCEF) is HIV-1 Vpr binding site. Cys-377 is an active-site residue. Residue Ser-472 is modified to Phosphoserine.

This sequence belongs to the MPI phosphatase family. As to quaternary structure, interacts with MAPK14 and 14-3-3 proteins. When phosphorylated on Ser-129 and/or Thr-130, interacts with PLK1. Interacts with MARK3/C-TAK1. In terms of assembly, (Microbial infection) Interacts with HIV-1 Vpr; this interaction inactivates CDC25C phosphatase activity. Phosphorylated by CHEK1 and MAPK14 at Ser-216. This phosphorylation creates a binding site for 14-3-3 protein and inhibits the phosphatase. Phosphorylated by PLK4. Phosphorylated by PLK1, leading to activate the phosphatase activity. Phosphorylation by PLK3 at Ser-191 promotes nuclear translocation. Ser-198 is a minor phosphorylation site. Was initially reported to be phosphorylated by PLK3 at Ser-216. However, such phosphorylation by PLK3 was not confirmed by other groups. Phosphorylation at Thr-48, Thr-67, Ser-122, Thr-130, Ser-168 and Ser-214 occurs at G2 and G2-M transition and is probably catalyzed by CDK1. Ser-168 phosphorylation levels are lower than those at the other 5 CDK1 sites. Phosphorylation by CDK1 leads to increased activity.

It localises to the nucleus. It carries out the reaction O-phospho-L-tyrosyl-[protein] + H2O = L-tyrosyl-[protein] + phosphate. Functionally, functions as a dosage-dependent inducer in mitotic control. Tyrosine protein phosphatase required for progression of the cell cycle. When phosphorylated, highly effective in activating G2 cells into prophase. Directly dephosphorylates CDK1 and activates its kinase activity. The chain is M-phase inducer phosphatase 3 (CDC25C) from Homo sapiens (Human).